We begin with the raw amino-acid sequence, 255 residues long: Imidazole glycerol phosphate synthase subunit HisF (255 aa).

Catalysis depends on residues D12 and D131.

The protein belongs to the HisA/HisF family. Heterodimer of HisH and HisF.

Its subcellular location is the cytoplasm. It catalyses the reaction 5-[(5-phospho-1-deoxy-D-ribulos-1-ylimino)methylamino]-1-(5-phospho-beta-D-ribosyl)imidazole-4-carboxamide + L-glutamine = D-erythro-1-(imidazol-4-yl)glycerol 3-phosphate + 5-amino-1-(5-phospho-beta-D-ribosyl)imidazole-4-carboxamide + L-glutamate + H(+). Its pathway is amino-acid biosynthesis; L-histidine biosynthesis; L-histidine from 5-phospho-alpha-D-ribose 1-diphosphate: step 5/9. Functionally, IGPS catalyzes the conversion of PRFAR and glutamine to IGP, AICAR and glutamate. The HisF subunit catalyzes the cyclization activity that produces IGP and AICAR from PRFAR using the ammonia provided by the HisH subunit. The sequence is that of Imidazole glycerol phosphate synthase subunit HisF from Neisseria gonorrhoeae (strain ATCC 700825 / FA 1090).